We begin with the raw amino-acid sequence, 371 residues long: MAAAPVFFPSSVVVSVYRAHGYAFSCSSLLSQLPAIKLSSYRPTRTDHTAITLLPNSNRIASRLQAMQSPTFEVNGDGKTEEVEKLQKGIAEFYDESSGIWEEIWGDHMHHGFYDPGTTVSLADHRTAQIRMIEEALRFASVSDDPMKKPKRIVDVGCGIGGSSRYFARKYDAECKGITLSPVQAKRAQALAVAEGLQGTVSFEVADALAQPFPHGQFDLVWSMESGEHMPDKEKFVRELVRVAAPGATIIIVTWCHRDLSPSEHSLKPQEQKLLNKICDSYYLPAWCSTADYVKILESLFLEDIKRADWSEYVAPFWPAVIRSALTWKGFTSLIRSGWKTIKGAMVMPLMIEGFKKDVIKFSVITCRKPE.

A chloroplast-targeting transit peptide spans Met-1–Gln-65. Residues Ile-153–Gly-162 are SAM motif I. An SAM motif II region spans residues Gly-216–Met-224. Residues Val-243 to Ile-252 are SAM motif III.

The protein belongs to the class I-like SAM-binding methyltransferase superfamily. gTMT family. As to quaternary structure, homodimer.

The protein resides in the plastid. Its subcellular location is the chloroplast inner membrane. It catalyses the reaction picrinine + S-adenosyl-L-methionine = ervincine + S-adenosyl-L-homocysteine + H(+). The protein operates within alkaloid biosynthesis; vindoline biosynthesis. Functionally, S-adenosyl-L-methionine-dependent N-methyltransferase involved in the biosynthesis of biologically active monoterpenoid indole alkaloids (MIAs) natural products including vindoline. Inactive with picrinine as substrate. This chain is Gamma-tocopherol methyltransferase, chloroplastic, found in Catharanthus roseus (Madagascar periwinkle).